The chain runs to 98 residues: Large ribosomal subunit protein uL23 (98 aa).

Belongs to the universal ribosomal protein uL23 family. As to quaternary structure, part of the 50S ribosomal subunit. Contacts protein L29, and trigger factor when it is bound to the ribosome.

One of the early assembly proteins it binds 23S rRNA. One of the proteins that surrounds the polypeptide exit tunnel on the outside of the ribosome. Forms the main docking site for trigger factor binding to the ribosome. The chain is Large ribosomal subunit protein uL23 from Bordetella avium (strain 197N).